The chain runs to 217 residues: ATP-dependent Clp protease proteolytic subunit (217 aa).

Serine 121 acts as the Nucleophile in catalysis. Residue histidine 146 is part of the active site.

Belongs to the peptidase S14 family. Fourteen ClpP subunits assemble into 2 heptameric rings which stack back to back to give a disk-like structure with a central cavity, resembling the structure of eukaryotic proteasomes.

It is found in the cytoplasm. The catalysed reaction is Hydrolysis of proteins to small peptides in the presence of ATP and magnesium. alpha-casein is the usual test substrate. In the absence of ATP, only oligopeptides shorter than five residues are hydrolyzed (such as succinyl-Leu-Tyr-|-NHMec, and Leu-Tyr-Leu-|-Tyr-Trp, in which cleavage of the -Tyr-|-Leu- and -Tyr-|-Trp bonds also occurs).. Cleaves peptides in various proteins in a process that requires ATP hydrolysis. Has a chymotrypsin-like activity. Plays a major role in the degradation of misfolded proteins. The protein is ATP-dependent Clp protease proteolytic subunit of Burkholderia cenocepacia (strain HI2424).